The following is a 118-amino-acid chain: Co-chaperonin GroES (118 aa).

The protein belongs to the GroES chaperonin family. In terms of assembly, heptamer of 7 subunits arranged in a ring. Interacts with the chaperonin GroEL.

The protein localises to the cytoplasm. Functionally, together with the chaperonin GroEL, plays an essential role in assisting protein folding. The GroEL-GroES system forms a nano-cage that allows encapsulation of the non-native substrate proteins and provides a physical environment optimized to promote and accelerate protein folding. GroES binds to the apical surface of the GroEL ring, thereby capping the opening of the GroEL channel. This chain is Co-chaperonin GroES, found in Helicobacter pylori (strain Shi470).